A 301-amino-acid polypeptide reads, in one-letter code: Rhodopsin (301 aa).

The Extracellular portion of the chain corresponds to 1-18 (LHMIHLHWYQYPPMNPMM). A helical transmembrane segment spans residues 19-43 (YPLLLVFMLITGILCLAGNFVTIWV). Residues 44-55 (FMNTKSLRTPAN) lie on the Cytoplasmic side of the membrane. Residues 56-78 (LLVVNLAMSDFLMMFTMFPPMMI) traverse the membrane as a helical segment. The Extracellular segment spans residues 79–92 (TCYYHTWTLGATFC). An intrachain disulfide couples C92 to C169. A helical transmembrane segment spans residues 93–115 (EVYAFLGNLCGCASIWTMVFITF). Positions 116–118 (DRY) match the 'Ionic lock' involved in activated form stabilization motif. At 116 to 134 (DRYNVIVKGVAGEPLSTKK) the chain is on the cytoplasmic side. Residues 135 to 155 (ASLWILTVWVLSFTWCVAPFF) traverse the membrane as a helical segment. Residues 156–182 (GWNRYVPEGNLTGCGTDYLSEDILSRS) are Extracellular-facing. N-linked (GlcNAc...) asparagine glycosylation occurs at N165. The helical transmembrane segment at 183–204 (YLYIYSTWVYFLPLAITIYCYV) threads the bilayer. The Cytoplasmic portion of the chain corresponds to 205–245 (FIIKAVAAHEKGMRDQAKKMGIKSLRNEEAQKTSAECRLAK). Residues 246 to 267 (IAMTTVALWFIAWTPYLLINWV) form a helical membrane-spanning segment. Topologically, residues 268–278 (GMFARSYLSPV) are extracellular. A helical transmembrane segment spans residues 279-300 (YTIWGYVFAKANAVYNPIVYAI). The residue at position 288 (K288) is an N6-(retinylidene)lysine.

Belongs to the G-protein coupled receptor 1 family. Opsin subfamily. As to quaternary structure, homodimer. Interacts with GNAQ. Contains one covalently linked retinal chromophore.

The protein resides in the cell projection. Its subcellular location is the rhabdomere membrane. Its function is as follows. Photoreceptor required for image-forming vision at low light intensity. Can use both retinal and 3-dehydroretinal as visual pigment. Light-induced isomerization of 11-cis to all-trans retinal triggers a conformational change that activates signaling via G-proteins. Signaling via GNAQ probably mediates the activation of phospholipase C. The polypeptide is Rhodopsin (RHO) (Lacunicambarus ludovicianus (Painted devil crayfish)).